The chain runs to 578 residues: Phenylalanine--tRNA ligase beta subunit (578 aa).

One can recognise a B5 domain in the interval 292-370; sequence FDTDEKSVSH…RAYGFDNLEP (79 aa). The Mg(2+) site is built by Asp-348, Asp-354, Asp-357, and Asp-358.

Belongs to the phenylalanyl-tRNA synthetase beta subunit family. Type 2 subfamily. Tetramer of two alpha and two beta subunits. Mg(2+) is required as a cofactor.

Its subcellular location is the cytoplasm. It carries out the reaction tRNA(Phe) + L-phenylalanine + ATP = L-phenylalanyl-tRNA(Phe) + AMP + diphosphate + H(+). This is Phenylalanine--tRNA ligase beta subunit from Halorubrum lacusprofundi (strain ATCC 49239 / DSM 5036 / JCM 8891 / ACAM 34).